The following is a 157-amino-acid chain: MNAEISKIYTDGACSGNPGPGGWGVVVYFGDGSVHEMGGAAAATTNNRMEMQAAIAALEFCQAAGHPPVILYTDSEYVKKGITEWLPGWKRKGWKTAQGKPVLNQDLWQVLDQLNTKSVNWQYVRGHSGNAGNERCDAIARAFAAGRQPELRQSRDL.

The region spanning 2–145 (NAEISKIYTD…CDAIARAFAA (144 aa)) is the RNase H type-1 domain. Mg(2+) contacts are provided by Asp11, Glu50, Asp74, and Asp137.

This sequence belongs to the RNase H family. Monomer. Requires Mg(2+) as cofactor.

It is found in the cytoplasm. The catalysed reaction is Endonucleolytic cleavage to 5'-phosphomonoester.. Endonuclease that specifically degrades the RNA of RNA-DNA hybrids. The sequence is that of Ribonuclease H from Cyanothece sp. (strain PCC 7425 / ATCC 29141).